Here is a 384-residue protein sequence, read N- to C-terminus: Glycerol 3-phosphate oxidase (384 aa).

Positions 1–15 are cleaved as a signal peptide; the sequence is METRDVLIVGGGVIG. Isoleucine 14 lines the FAD pocket. A lipid anchor (N-palmitoyl cysteine) is attached at cysteine 16. The S-diacylglycerol cysteine moiety is linked to residue cysteine 16. FAD-binding positions include glutamate 33, 42–43, and 47–49; these read TS and SGV. Residues serine 47 and histidine 51 each coordinate sn-glycerol 3-phosphate. Histidine 51 serves as the catalytic Proton acceptor. FAD is bound at residue valine 177. Residues lysine 258 and arginine 320 each contribute to the sn-glycerol 3-phosphate site. 346-347 lines the FAD pocket; sequence MK. A sn-glycerol 3-phosphate-binding site is contributed by serine 348. An FAD-binding site is contributed by threonine 352.

Monomer. The cofactor is FAD.

The protein localises to the cytoplasm. It is found in the cell membrane. The enzyme catalyses sn-glycerol 3-phosphate + O2 = dihydroxyacetone phosphate + H2O2. Its pathway is polyol metabolism; glycerol degradation via glycerol kinase pathway; glycerone phosphate from sn-glycerol 3-phosphate (aerobic route): step 1/1. Its function is as follows. Catalyzes the oxidation of glycerol 3-phosphate to dihydroxyacetone phosphate (DHAP), with a reduction of O2 to H2O2. The formation of hydrogen peroxide by this enzyme is crucial for cytotoxic effects of M.pneumoniae on host cells. Is involved in the metabolism of glycerol and is essential for glycerol utilization; glycerol is one of the few carbon sources that can be utilized by M.pneumoniae for growth. To a lesser extent, is also able to use glyceraldehyde 3-phosphate (GAP), an intermediate in the glycolysis pathway, as a substrate (but the structure of the product has not been elucidated). Therefore, in the absence of glycerol, GAP may serve as a substrate in the GlpO reaction to supply H2O2 during mycoplasma infection. Does not show any dehydrogenase activity with NAD(+). This chain is Glycerol 3-phosphate oxidase, found in Mycoplasma pneumoniae (strain ATCC 29342 / M129 / Subtype 1) (Mycoplasmoides pneumoniae).